The primary structure comprises 62 residues: Large ribosomal subunit protein eL24 (62 aa).

Zn(2+) contacts are provided by Cys7, Cys10, Cys33, and Cys37. The C4-type zinc-finger motif lies at Cys7–Cys37.

Belongs to the eukaryotic ribosomal protein eL24 family. In terms of assembly, part of the 50S ribosomal subunit. Forms a cluster with proteins L3 and L14. It depends on Zn(2+) as a cofactor.

Binds to the 23S rRNA. The chain is Large ribosomal subunit protein eL24 from Halobacterium salinarum (strain ATCC 29341 / DSM 671 / R1).